The sequence spans 475 residues: Aspartyl/glutamyl-tRNA(Asn/Gln) amidotransferase subunit B (475 aa).

Belongs to the GatB/GatE family. GatB subfamily. Heterotrimer of A, B and C subunits.

The catalysed reaction is L-glutamyl-tRNA(Gln) + L-glutamine + ATP + H2O = L-glutaminyl-tRNA(Gln) + L-glutamate + ADP + phosphate + H(+). The enzyme catalyses L-aspartyl-tRNA(Asn) + L-glutamine + ATP + H2O = L-asparaginyl-tRNA(Asn) + L-glutamate + ADP + phosphate + 2 H(+). Its function is as follows. Allows the formation of correctly charged Asn-tRNA(Asn) or Gln-tRNA(Gln) through the transamidation of misacylated Asp-tRNA(Asn) or Glu-tRNA(Gln) in organisms which lack either or both of asparaginyl-tRNA or glutaminyl-tRNA synthetases. The reaction takes place in the presence of glutamine and ATP through an activated phospho-Asp-tRNA(Asn) or phospho-Glu-tRNA(Gln). This Bacillus thuringiensis subsp. konkukian (strain 97-27) protein is Aspartyl/glutamyl-tRNA(Asn/Gln) amidotransferase subunit B.